Here is a 300-residue protein sequence, read N- to C-terminus: MRYREIILSIPKEIAENFTSFLDEVGVVGYYEILFDREVPRAPDEEIISDDTKFRVYLAEEDKENETKILIFLKATAGESFFLESRWIETKEYEEAYKEFYKPFIIGSYRVIPTWEKDTALGTTPEGIFPLLVNPGLAFGTGHHETTRLVLGRMGDLNLSAKRIADVGTGSGILSLAAAKSGASLILAIDVDPNSVRSASFNRDENEISSEVLVVEEGGFDHKKIQEQTWDLLIANITFAVLKANIQKIASIKTDHFLFSGVITERKEEFLELLKNTVGGEGVFFREDTGWELIEWKRKG.

S-adenosyl-L-methionine-binding residues include Thr147, Gly168, Asp190, and Asn236.

This sequence belongs to the methyltransferase superfamily. PrmA family.

The protein resides in the cytoplasm. The catalysed reaction is L-lysyl-[protein] + 3 S-adenosyl-L-methionine = N(6),N(6),N(6)-trimethyl-L-lysyl-[protein] + 3 S-adenosyl-L-homocysteine + 3 H(+). Methylates ribosomal protein L11. The polypeptide is Ribosomal protein L11 methyltransferase (Leptospira interrogans serogroup Icterohaemorrhagiae serovar Lai (strain 56601)).